Reading from the N-terminus, the 524-residue chain is uncharacterized protein (524 aa).

Residues 1-21 form the signal peptide; that stretch reads MLLRSVWYKLGSLLIILPLTG. The N-palmitoyl cysteine moiety is linked to residue C22. Residue C22 is the site of S-diacylglycerol cysteine attachment.

The protein belongs to the MG067/MG068/MG395 family.

It is found in the cell membrane. This is an uncharacterized protein from Mycoplasma pneumoniae (strain ATCC 29342 / M129 / Subtype 1) (Mycoplasmoides pneumoniae).